The following is a 355-amino-acid chain: Guanine nucleotide-binding protein G(i) subunit alpha-2 (355 aa).

The N-myristoyl glycine moiety is linked to residue Gly-2. Residue Cys-3 is the site of S-palmitoyl cysteine attachment. The 324-residue stretch at 32 to 355 (REVKLLLLGA…KNNLKDCGLF (324 aa)) folds into the G-alpha domain. Positions 35–48 (KLLLLGAGESGKST) are G1 motif. GTP is bound by residues 40–47 (GAGESGKS), 176–182 (LRTRVKT), 201–205 (DVGGQ), 270–273 (NKKD), and Ala-327. 2 residues coordinate Mg(2+): Ser-47 and Thr-182. The interval 174-182 (DVLRTRVKT) is G2 motif. The interval 197–206 (FKMFDVGGQR) is G3 motif. Positions 266–273 (ILFLNKKD) are G4 motif. Residues 325–330 (TCATDT) are G5 motif.

It belongs to the G-alpha family. G(i/o/t/z) subfamily. G proteins are composed of 3 units; alpha, beta and gamma. The alpha chain contains the guanine nucleotide binding site. In this context, interacts with GNB2. Interacts with UNC5B. Interacts with GPSM1. Interacts with RGS12 and RGS14. Interacts (inactive GDP-bound form) with NUCB1 (via GBA motif); the interaction leads to activation of GNAI3. Interacts (inactive GDP-bound form) with CCDC88C/DAPLE (via GBA motif). Interacts (inactive GDP-bound form) with CCDC8A/GIV (via GBA motif). Interacts with CXCR1 and CXCR2.

The protein resides in the cytoplasm. It localises to the cytoskeleton. It is found in the microtubule organizing center. Its subcellular location is the centrosome. The protein localises to the cell membrane. The protein resides in the membrane. Guanine nucleotide-binding proteins (G proteins) are involved as modulators or transducers in various transmembrane signaling systems. The G(i) proteins are involved in hormonal regulation of adenylate cyclase: they inhibit the cyclase in response to beta-adrenergic stimuli. May play a role in cell division. In Mus musculus (Mouse), this protein is Guanine nucleotide-binding protein G(i) subunit alpha-2 (Gnai2).